Reading from the N-terminus, the 379-residue chain is MKNGMLALILAGGQGTRLGKLTQSIAKPAVQFGGRYRIIDFALSNCANSGIHNVGVITQYQPLALNNHIGNGSSWGLDGINSGATILQPYSATEGNRWFQGTSHAIYQNIDYIDSINPEYVLILSGDHIYKMDYDDMLQTHKANMASLTVAVIDVPLKEAGRFGIMNTDTNDRIVEFEEKPANPKSTKASMGIYIFNWQRLRTMLVDAEKNNIDMSDFGQHVIPSYLESGERVYTYNFKGYWKDVGTIESLWEANMEYIGEENALDSRDRSWKIYSKNHIAPPNFITEDAEVKDSLVVDGSFISGKVNHSILSTNVQVRKGAEVKDSFIMSDVIIGEGARITRAIIGEGAVIGDHVVIDGSKDVQVVGYNEVVGVPNED.

Alpha-D-glucose 1-phosphate contacts are provided by residues Gly164, 179–180 (EK), and Ser190.

Belongs to the bacterial/plant glucose-1-phosphate adenylyltransferase family. In terms of assembly, homotetramer.

It carries out the reaction alpha-D-glucose 1-phosphate + ATP + H(+) = ADP-alpha-D-glucose + diphosphate. It participates in glycan biosynthesis; glycogen biosynthesis. In terms of biological role, involved in the biosynthesis of ADP-glucose, a building block required for the elongation reactions to produce glycogen. Catalyzes the reaction between ATP and alpha-D-glucose 1-phosphate (G1P) to produce pyrophosphate and ADP-Glc. In Streptococcus equi subsp. zooepidemicus (strain H70), this protein is Glucose-1-phosphate adenylyltransferase.